Here is a 324-residue protein sequence, read N- to C-terminus: Adenine deaminase (324 aa).

Positions 11, 13, and 189 each coordinate Zn(2+). Glu192 acts as the Proton donor in catalysis. Zn(2+) is bound at residue Asp270. Asp271 contributes to the substrate binding site.

This sequence belongs to the metallo-dependent hydrolases superfamily. Adenosine and AMP deaminases family. Adenine deaminase type 2 subfamily. Zn(2+) serves as cofactor.

It carries out the reaction adenine + H2O + H(+) = hypoxanthine + NH4(+). Functionally, catalyzes the hydrolytic deamination of adenine to hypoxanthine. Plays an important role in the purine salvage pathway and in nitrogen catabolism. The protein is Adenine deaminase of Sinorhizobium medicae (strain WSM419) (Ensifer medicae).